Reading from the N-terminus, the 225-residue chain is Protein-L-isoaspartate O-methyltransferase (225 aa).

The active site involves serine 75.

This sequence belongs to the methyltransferase superfamily. L-isoaspartyl/D-aspartyl protein methyltransferase family.

It localises to the cytoplasm. It carries out the reaction [protein]-L-isoaspartate + S-adenosyl-L-methionine = [protein]-L-isoaspartate alpha-methyl ester + S-adenosyl-L-homocysteine. In terms of biological role, catalyzes the methyl esterification of L-isoaspartyl residues in peptides and proteins that result from spontaneous decomposition of normal L-aspartyl and L-asparaginyl residues. It plays a role in the repair and/or degradation of damaged proteins. This chain is Protein-L-isoaspartate O-methyltransferase, found in Xylella fastidiosa (strain M23).